Reading from the N-terminus, the 128-residue chain is Photosystem II reaction center Psb28 protein (128 aa).

A disordered region spans residues 109 to 128; the sequence is SGLGYSQDSGEAPASDSSNG. Positions 111-128 are enriched in polar residues; it reads LGYSQDSGEAPASDSSNG.

Belongs to the Psb28 family. As to quaternary structure, part of the photosystem II complex.

It is found in the cellular thylakoid membrane. The protein is Photosystem II reaction center Psb28 protein of Synechococcus sp. (strain CC9311).